The chain runs to 468 residues: UDP-glucosyl transferase 74CD1 (468 aa).

Glycine 20 is a UDP-alpha-D-glucose binding site. The active-site Proton acceptor is histidine 21. Aspartate 114 functions as the Charge relay in the catalytic mechanism. 10 residues coordinate UDP-alpha-D-glucose: serine 292, tryptophan 344, glutamine 347, histidine 362, tryptophan 365, asparagine 366, serine 367, glutamate 370, aspartate 386, and glutamine 387.

The protein belongs to the UDP-glycosyltransferase family. In terms of tissue distribution, mainly expressed in flowers, flower buds and young leaves, and, to a lesser extent, in old leaves, stems and roots.

It participates in secondary metabolite biosynthesis; terpenoid biosynthesis. Its function is as follows. Component of the oleanane-type triterpene saponins (e.g. saponarioside A and saponarioside B) biosynthetic pathway, leading to the production of natural products with detergent properties used as traditional sources of soap. A glycosyltransferase that, together with SDR1, mediates the conversion of QA-tri to QA-triF; UGT74CD1 may transfer 4-keto-6-deoxy-glucose to QA-tri, which is in turn reduced to D-fucose by SDR1, thus leading to QA-triF formation via the initiation of the C-28 sugar chain. This is UDP-glucosyl transferase 74CD1 from Saponaria officinalis (Common soapwort).